Here is a 222-residue protein sequence, read N- to C-terminus: Abasic site processing protein YedK (222 aa).

C2 functions as the Nucleophile in the catalytic mechanism. The residue at position 2 (C2) is a Thiazolidine linkage to a ring-opened DNA abasic site. Residue E105 is part of the active site.

The protein belongs to the SOS response-associated peptidase family.

With respect to regulation, formation and reversal of DNA-protein cross-link depends on DNA context. Catalyzes formation of the thiazolidine linkage in presence of abasic sites in single-stranded DNA. Mediates the reversal of the thiazolidine cross-link in presence of double stranded DNA. Its function is as follows. Sensor of abasic sites in single-stranded DNA (ssDNA) required to preserve genome integrity by promoting error-free repair of abasic sites. Recognizes and binds abasic sites in ssDNA at replication forks and chemically modifies the lesion by forming a covalent cross-link with DNA: forms a stable thiazolidine linkage between a ring-opened abasic site and the alpha-amino and sulfhydryl substituents of its N-terminal catalytic cysteine residue. The DNA-protein cross-link is then reversed: able to catalyze the reversal of the thiazolidine cross-link and cycle between a cross-link and a non-cross-linked state depending on DNA context: mediates self-reversal of the thiazolidine cross-link in double stranded DNA. May act as a protease: mediates autocatalytic processing of its N-terminal methionine in order to expose the catalytic cysteine. This Escherichia coli (strain K12) protein is Abasic site processing protein YedK.